Here is a 104-residue protein sequence, read N- to C-terminus: Growth-regulated protein homolog (104 aa).

The signal sequence occupies residues 1–31 (MAPAATAAAPRLLRAALLLLLLVAAGRRAAG). Disulfide bonds link Cys-40/Cys-66 and Cys-42/Cys-82.

This sequence belongs to the intercrine alpha (chemokine CxC) family.

It localises to the secreted. Plays a role in monocyte adhesion to the endothelium. This chain is Growth-regulated protein homolog, found in Oryctolagus cuniculus (Rabbit).